A 215-amino-acid polypeptide reads, in one-letter code: Adenylate kinase (215 aa).

An ATP-binding site is contributed by 10 to 15 (GAGKGT). The tract at residues 30–60 (STGDMLRAAIIKAGTEMGKQAKSVIDAGQLV) is NMP. Residues threonine 31, arginine 36, 58–60 (QLV), 86–89 (GFPR), and glutamine 93 contribute to the AMP site. An LID region spans residues 123-160 (GRRAHLPSGRTYHVTFNPSKVEGQDDVTGEPLVIREDD). Residues arginine 124 and 133–134 (TY) contribute to the ATP site. Positions 157 and 168 each coordinate AMP. Position 201 (lysine 201) interacts with ATP.

Belongs to the adenylate kinase family. Monomer.

It localises to the cytoplasm. It catalyses the reaction AMP + ATP = 2 ADP. The protein operates within purine metabolism; AMP biosynthesis via salvage pathway; AMP from ADP: step 1/1. Functionally, catalyzes the reversible transfer of the terminal phosphate group between ATP and AMP. Plays an important role in cellular energy homeostasis and in adenine nucleotide metabolism. The polypeptide is Adenylate kinase (Aliivibrio salmonicida (strain LFI1238) (Vibrio salmonicida (strain LFI1238))).